Here is a 460-residue protein sequence, read N- to C-terminus: Transcription factor TGA10 (460 aa).

The span at 1–11 (MQGHHQNHHQH) shows a compositional bias: basic residues. 2 disordered regions span residues 1–29 (MQGH…NKDG) and 43–163 (LDGQ…PKTL). Residues 12–21 (LSSSSATSSH) show a composition bias toward low complexity. 2 stretches are compositionally biased toward polar residues: residues 65 to 81 (TQNL…NIFP) and 121 to 136 (DLTN…QGSK). The span at 138–162 (IKKEGNRKGLASSDHDIPKSSDPKT) shows a compositional bias: basic and acidic residues. In terms of domain architecture, bZIP spans 159–203 (DPKTLRRLAQNREAARKSRLRKKAYVQQLESCRIKLTQLEQEIQR). A basic motif region spans residues 161-181 (KTLRRLAQNREAARKSRLRKK). The short motif at 163-170 (LRRLAQNR) is the Nuclear localization signal element. The interval 187–201 (LESCRIKLTQLEQEI) is leucine-zipper. Positions 236 to 455 (AAVFDMEYAR…QALSSLWLAR (220 aa)) constitute a DOG1 domain.

Belongs to the bZIP family. As to quaternary structure, homodimer. Binds DNA as a dimer. Interacts with floral glutaredoxins GRXC7/ROXY1 and GRXC8/ROXY2 in the nucleus. Interacts with TGA1, TGA2, TGA3, TGA4, TGA5, TGA6, TGA7, TGA9 and PAN. As to expression, expressed at low levels in inflorescence apex and flowers.

Its subcellular location is the nucleus. Together with TGA9, basic leucine-zipper transcription factor required for anther development, probably via the activation of SPL expression in anthers and via the regulation of genes with functions in early and middle tapetal development. Required for signaling responses to pathogen-associated molecular patterns (PAMPs) such as flg22 that involves chloroplastic reactive oxygen species (ROS) production and subsequent expression of H(2)O(2)-responsive genes. The polypeptide is Transcription factor TGA10 (Arabidopsis thaliana (Mouse-ear cress)).